The primary structure comprises 898 residues: Alanine--tRNA ligase (898 aa).

Residues histidine 582, histidine 586, cysteine 685, and histidine 689 each contribute to the Zn(2+) site.

Belongs to the class-II aminoacyl-tRNA synthetase family. It depends on Zn(2+) as a cofactor.

The protein localises to the cytoplasm. The catalysed reaction is tRNA(Ala) + L-alanine + ATP = L-alanyl-tRNA(Ala) + AMP + diphosphate. Catalyzes the attachment of alanine to tRNA(Ala) in a two-step reaction: alanine is first activated by ATP to form Ala-AMP and then transferred to the acceptor end of tRNA(Ala). Also edits incorrectly charged Ser-tRNA(Ala) and Gly-tRNA(Ala) via its editing domain. The polypeptide is Alanine--tRNA ligase (Mycolicibacterium vanbaalenii (strain DSM 7251 / JCM 13017 / BCRC 16820 / KCTC 9966 / NRRL B-24157 / PYR-1) (Mycobacterium vanbaalenii)).